We begin with the raw amino-acid sequence, 176 residues long: MTRLTVEDLNQADKERFVDAVGDVYEESPWVAKRTWSEQPFSSIDGLQQAMANTVQDASQQKQLELLRAHPDLGERTEMTDESQEEQASAGLDRLPPAQYETFQTLNDTYRDKFGFPFIMAVKDESVGTIQQAMEDRIDHSRSKEFQTALNEVNVIAALRLEELTVPRDGTQEQHA.

His70 functions as the Proton donor; for OHCU decarboxylase activity in the catalytic mechanism. Substrate contacts are provided by residues Pro71, 83 to 87 (SQEEQ), and 118 to 122 (FIMAV). The disordered stretch occupies residues 72–96 (DLGERTEMTDESQEEQASAGLDRLP).

This sequence belongs to the OHCU decarboxylase family.

It catalyses the reaction 5-hydroxy-2-oxo-4-ureido-2,5-dihydro-1H-imidazole-5-carboxylate + H(+) = (S)-allantoin + CO2. It functions in the pathway purine metabolism; urate degradation; (S)-allantoin from urate: step 3/3. In terms of biological role, catalyzes the stereoselective decarboxylation of 2-oxo-4-hydroxy-4-carboxy-5-ureidoimidazoline (OHCU) to (S)-allantoin. The sequence is that of 2-oxo-4-hydroxy-4-carboxy-5-ureidoimidazoline decarboxylase from Halalkalicoccus jeotgali (strain DSM 18796 / CECT 7217 / JCM 14584 / KCTC 4019 / B3).